We begin with the raw amino-acid sequence, 437 residues long: Bile acid CoA-transferase BaiK (437 aa).

The active-site Nucleophile is the Asp171.

It belongs to the CoA-transferase III family.

The catalysed reaction is deoxycholoyl-CoA + cholate = choloyl-CoA + deoxycholate. It catalyses the reaction allodeoxycholoyl-CoA + cholate = allodeoxycholate + choloyl-CoA. The enzyme catalyses allocholate + deoxycholoyl-CoA = allocholoyl-CoA + deoxycholate. It carries out the reaction allocholate + allodeoxycholoyl-CoA = allocholoyl-CoA + allodeoxycholate. The catalysed reaction is ursodeoxycholate + deoxycholoyl-CoA = ursodeoxycholoyl-CoA + deoxycholate. It catalyses the reaction allodeoxycholoyl-CoA + ursodeoxycholate = ursodeoxycholoyl-CoA + allodeoxycholate. Its pathway is lipid metabolism; bile acid biosynthesis. Functions in the bile acid 7alpha-dehydroxylation pathway, which forms secondary bile acids via the 7alpha-dehydroxylation of primary bile acids, and is carried out by intestinal anaerobic bacteria. Acts as a bile acid CoA transferase with broad bile acid substrate specificity. Catalyzes the transfer of the CoA moiety of secondary bile acid-CoA compounds to primary bile acids. Can use deoxycholoyl-CoA and allodeoxycholoyl-CoA as bile acid CoA donors and cholate, allocholate and ursodeoxycholate as bile acid CoA acceptors. Shows no activity when lithocholoyl-CoA is used as the CoA donor. The protein is Bile acid CoA-transferase BaiK of Clostridium scindens (strain JCM 10418 / VPI 12708).